Reading from the N-terminus, the 881-residue chain is MLQPTTCSKQQQQRQQPAIATAAVGGAAVQELLRKAAAKDHGALAAATATATAASTTATTATAATASRNSSNTWCHSDDMLSAGRSRSSSTTIDFNSRRRRGRLRGHAPSDLAMNKQHQATILDECVNIFKRLVLLTLKTISATTITKAKTRSRTAAQLPATSAASATSSRGASAEQLLHPSSRSRCRSRRCLRLPIYSILLLCLTTQGLGLGDAAKPRPAKQHFGGSNSNSPNQNQNHNDVLGGVGAPSQTSGEDEAEIMYPFQSGEQMFGLEEDQEQDPELNSNAVPGSDEDNAGNQRGINDTHNDNSTTTKTPLFPKDLFTKEQLENGAVILHIIGVIYMFVALAIVCDEFFVPSLDVIIEKLGITDDVAGATFMAAGGSAPELFTSVIGVFVSFDDVGIGTIVGSAVFNILFVIGMCALFSKTVLSLTWWPLFRDCSFYSISLLVLIYFFRDNRIFWWEALILFTIYIGYVAFMKWNVQVETCVKKMITKNKVTRVRSTDQLMPAGNAANSSETSMATQPGGSVTSRAASETRSGPPGSSNAGATGNSSGGGGTSGSTQTGAKFRHGLLQLMIHTIDPLHDGKVDEKATQLHAIASLKVLLDATKPQRGGATTSAANHVKINLKETTLADRPNGNIDTTLDSPSLSGRRPSWIEQRVKIQTRKFSIKAPEIEDEPEPLSMAWPDTARKRLTYVLVAPLLVPMWLTLPDTRTPRGKRFFPVTFIGSIVWIAAFSYLMVWWANVAGDTARIPPEVMGLTFLAAGTSIPDLITSVIVARKGFGDMAVSSSVGSNIFDVTVGLPIPWLLYGIIYGAPVEVNSVGMVCSITILFMMLVFVVMSIACFRWRMNKGLGFTMFLLYFAFVAVSLMFEYDVITCPF.

At 1 to 194 the chain is on the extracellular side; the sequence is MLQPTTCSKQ…SRCRSRRCLR (194 aa). N69 carries an N-linked (GlcNAc...) asparagine glycan. 4 disordered regions span residues 79-111, 149-181, 215-255, and 272-315; these read DMLS…APSD, AKTR…LLHP, AAKP…TSGE, and GLEE…TTKT. Residues 85–95 are compositionally biased toward polar residues; it reads RSRSSSTTIDF. The segment covering 149–175 has biased composition (low complexity); sequence AKTRSRTAAQLPATSAASATSSRGASA. Residues 195–215 traverse the membrane as a helical segment; the sequence is LPIYSILLLCLTTQGLGLGDA. Over 216-330 the chain is Cytoplasmic; that stretch reads AKPRPAKQHF…DLFTKEQLEN (115 aa). Positions 228–240 are enriched in low complexity; sequence SNSNSPNQNQNHN. A compositionally biased stretch (polar residues) spans 296–315; the sequence is AGNQRGINDTHNDNSTTTKT. The helical transmembrane segment at 331 to 351 threads the bilayer; the sequence is GAVILHIIGVIYMFVALAIVC. At 352 to 375 the chain is on the extracellular side; sequence DEFFVPSLDVIIEKLGITDDVAGA. The stretch at 372 to 412 is one Alpha-1 repeat; that stretch reads VAGATFMAAGGSAPELFTSVIGVFVSFDDVGIGTIVGSAVF. A helical transmembrane segment spans residues 376–396; the sequence is TFMAAGGSAPELFTSVIGVFV. Residues 397–402 lie on the Cytoplasmic side of the membrane; it reads SFDDVG. The helical transmembrane segment at 403 to 423 threads the bilayer; sequence IGTIVGSAVFNILFVIGMCAL. Topologically, residues 424–433 are extracellular; it reads FSKTVLSLTW. A helical transmembrane segment spans residues 434 to 454; that stretch reads WPLFRDCSFYSISLLVLIYFF. The Cytoplasmic segment spans residues 455 to 458; sequence RDNR. Residues 459-479 traverse the membrane as a helical segment; that stretch reads IFWWEALILFTIYIGYVAFMK. The Extracellular portion of the chain corresponds to 480–720; sequence WNVQVETCVK…PDTRTPRGKR (241 aa). Positions 508-565 are disordered; that stretch reads PAGNAANSSETSMATQPGGSVTSRAASETRSGPPGSSNAGATGNSSGGGGTSGSTQTG. A compositionally biased stretch (polar residues) spans 512-537; the sequence is AANSSETSMATQPGGSVTSRAASETR. Residues N514 and N551 are each glycosylated (N-linked (GlcNAc...) asparagine). Positions 542–551 are enriched in low complexity; that stretch reads GSSNAGATGN. A helical transmembrane segment spans residues 721–741; that stretch reads FFPVTFIGSIVWIAAFSYLMV. Residues 742–756 are Cytoplasmic-facing; the sequence is WWANVAGDTARIPPE. A helical membrane pass occupies residues 757 to 777; it reads VMGLTFLAAGTSIPDLITSVI. Residues 764 to 795 form an Alpha-2 repeat; that stretch reads AAGTSIPDLITSVIVARKGFGDMAVSSSVGSN. Topologically, residues 778–795 are extracellular; sequence VARKGFGDMAVSSSVGSN. Residues 796-816 traverse the membrane as a helical segment; it reads IFDVTVGLPIPWLLYGIIYGA. The Cytoplasmic portion of the chain corresponds to 817–822; it reads PVEVNS. Residues 823–843 traverse the membrane as a helical segment; sequence VGMVCSITILFMMLVFVVMSI. The Extracellular portion of the chain corresponds to 844 to 852; the sequence is ACFRWRMNK. The chain crosses the membrane as a helical span at residues 853–873; it reads GLGFTMFLLYFAFVAVSLMFE. The Cytoplasmic portion of the chain corresponds to 874 to 881; sequence YDVITCPF.

It belongs to the Ca(2+):cation antiporter (CaCA) (TC 2.A.19) family. SLC24A subfamily. Expressed in the adult nervous system. Expressed in the photoreceptor cells as well as in the lamina, medulla, and optic lobes of the brain.

It is found in the membrane. In terms of biological role, may function in the removal and maintenance of calcium homeostasis during signaling in the adult and in signaling events during embryogenesis and patterning of imaginal disks. Transports one Ca(2+) and 1 K(+) in exchange for 4 Na(+). This is Sodium/potassium/calcium exchanger Nckx30C (Nckx30C) from Drosophila melanogaster (Fruit fly).